The primary structure comprises 334 residues: Ribosomal RNA small subunit methyltransferase H (334 aa).

S-adenosyl-L-methionine contacts are provided by residues 54–56 (GGH), aspartate 74, phenylalanine 100, aspartate 121, and glutamine 128. The segment at 272–318 (RHSKGQYPEDENLPMPPKRPRYFSKPKRVGPSKAEISNNPRSRSAWL) is disordered. Over residues 289–301 (KRPRYFSKPKRVG) the composition is skewed to basic residues.

It belongs to the methyltransferase superfamily. RsmH family.

The protein localises to the cytoplasm. It carries out the reaction cytidine(1402) in 16S rRNA + S-adenosyl-L-methionine = N(4)-methylcytidine(1402) in 16S rRNA + S-adenosyl-L-homocysteine + H(+). Its function is as follows. Specifically methylates the N4 position of cytidine in position 1402 (C1402) of 16S rRNA. This chain is Ribosomal RNA small subunit methyltransferase H, found in Psychrobacter arcticus (strain DSM 17307 / VKM B-2377 / 273-4).